The primary structure comprises 339 residues: Protein pelota homolog (339 aa).

Belongs to the eukaryotic release factor 1 family. Pelota subfamily. As to quaternary structure, monomer. The cofactor is a divalent metal cation.

Its subcellular location is the cytoplasm. Its function is as follows. May function in recognizing stalled ribosomes, interact with stem-loop structures in stalled mRNA molecules, and effect endonucleolytic cleavage of the mRNA. May play a role in the release non-functional ribosomes and degradation of damaged mRNAs. Has endoribonuclease activity. This Picrophilus torridus (strain ATCC 700027 / DSM 9790 / JCM 10055 / NBRC 100828 / KAW 2/3) protein is Protein pelota homolog.